The following is a 233-amino-acid chain: Orotidine 5'-phosphate decarboxylase (233 aa).

Substrate-binding positions include Asp-10, Lys-32, 60-69 (DLKLHDIPAT), Thr-115, Arg-176, Gln-185, Gly-205, and Arg-206. Lys-62 functions as the Proton donor in the catalytic mechanism.

The protein belongs to the OMP decarboxylase family. Type 1 subfamily. As to quaternary structure, homodimer.

The catalysed reaction is orotidine 5'-phosphate + H(+) = UMP + CO2. Its pathway is pyrimidine metabolism; UMP biosynthesis via de novo pathway; UMP from orotate: step 2/2. Catalyzes the decarboxylation of orotidine 5'-monophosphate (OMP) to uridine 5'-monophosphate (UMP). The sequence is that of Orotidine 5'-phosphate decarboxylase from Thermobifida fusca (strain YX).